The primary structure comprises 33 residues: PSHVRRKIMSWPLSKELRQKYSVRSMPIRKDDE.

This sequence belongs to the universal ribosomal protein uL24 family. In terms of assembly, component of the large ribosomal subunit.

Its subcellular location is the cytoplasm. In terms of biological role, component of the large ribosomal subunit. The ribosome is a large ribonucleoprotein complex responsible for the synthesis of proteins in the cell. The polypeptide is Large ribosomal subunit protein uL24 (rpl26) (Xenopus laevis (African clawed frog)).